The chain runs to 207 residues: Probable GTP-binding protein EngB (207 aa).

Positions 22 to 194 (DLPEVAFAGR…LQRLDVALSD (173 aa)) constitute an EngB-type G domain. GTP contacts are provided by residues 30–37 (GRSNVGKS), 57–61 (GRTQL), 75–78 (DLPG), 142–145 (TKVD), and 173–175 (FSA). Positions 37 and 59 each coordinate Mg(2+).

It belongs to the TRAFAC class TrmE-Era-EngA-EngB-Septin-like GTPase superfamily. EngB GTPase family. The cofactor is Mg(2+).

Its function is as follows. Necessary for normal cell division and for the maintenance of normal septation. This is Probable GTP-binding protein EngB from Syntrophotalea carbinolica (strain DSM 2380 / NBRC 103641 / GraBd1) (Pelobacter carbinolicus).